Consider the following 188-residue polypeptide: Ribosome-recycling factor (188 aa).

Belongs to the RRF family.

It is found in the cytoplasm. In terms of biological role, responsible for the release of ribosomes from messenger RNA at the termination of protein biosynthesis. May increase the efficiency of translation by recycling ribosomes from one round of translation to another. The chain is Ribosome-recycling factor from Lawsonia intracellularis (strain PHE/MN1-00).